Consider the following 63-residue polypeptide: Sperm protamine P1 (63 aa).

Residues 1 to 63 (MARYRRHSRS…RYSRRGRRRY (63 aa)) are disordered.

The protein belongs to the protamine P1 family. As to expression, testis.

The protein localises to the nucleus. It localises to the chromosome. Protamines substitute for histones in the chromatin of sperm during the haploid phase of spermatogenesis. They compact sperm DNA into a highly condensed, stable and inactive complex. In Phascogale tapoatafa (Common wambenger), this protein is Sperm protamine P1 (PRM1).